A 184-amino-acid chain; its full sequence is MGLLTILKKMKQKERELRLLMLGLDNAGKTTILKKFNGEDIDTISPTLGFNIKTLEHRGFKLNIWDVGGQKSLRSYWRNYFESTDGLIWVVDSADRQRMQDCQRELQSLLVEERLAGATLLIFANKQDLPGALSSNAIREVLELDSIRSHHWCIQGCSAVTGENLLPGIDWLLDDISSRIFTAD.

Gly-2 is lipidated: N-myristoyl glycine. 23–30 (GLDNAGKT) serves as a coordination point for GTP. Ser-45 is modified (phosphoserine). GTP contacts are provided by residues 66–70 (DVGGQ) and Gly-68. Lys-71 is covalently cross-linked (Glycyl lysine isopeptide (Lys-Gly) (interchain with G-Cter in ubiquitin)). 125–128 (NKQD) is a binding site for GTP.

This sequence belongs to the small GTPase superfamily. Arf family. As to quaternary structure, found in a complex with ARL2, ARL2BP and SLC25A6. Found in a complex with at least ARL2, PPP2CB, PPP2R1A, PPP2R2A, PPP2R5E and TBCD. Found in a complex with ARL2, ARL2BP and SLC25A4. The GTP-bound form interacts with PDE6D. Interacts with ELMOD2. The GTP-bound form interacts with ARL2BP. Interacts, preferentially in its GDP-bound state, with TBCD. Interacts with UNC119. Not N-myristoylated.

The protein resides in the mitochondrion intermembrane space. Its subcellular location is the cytoplasm. It is found in the cytoskeleton. The protein localises to the microtubule organizing center. It localises to the centrosome. The protein resides in the nucleus. Functionally, small GTP-binding protein which cycles between an inactive GDP-bound and an active GTP-bound form, and the rate of cycling is regulated by guanine nucleotide exchange factors (GEF) and GTPase-activating proteins (GAP). GTP-binding protein that does not act as an allosteric activator of the cholera toxin catalytic subunit. Regulates formation of new microtubules and centrosome integrity. Prevents the TBCD-induced microtubule destruction. Participates in association with TBCD, in the disassembly of the apical junction complexes. Antagonizes the effect of TBCD on epithelial cell detachment and tight and adherens junctions disassembly. Together with ARL2, plays a role in the nuclear translocation, retention and transcriptional activity of STAT3. Component of a regulated secretory pathway involved in Ca(2+)-dependent release of acetylcholine. Required for normal progress through the cell cycle. Also regulates mitochondrial integrity and function. The chain is ADP-ribosylation factor-like protein 2 (ARL2) from Homo sapiens (Human).